The primary structure comprises 393 residues: Cytochrome b (393 aa).

Over 1–33 (MTIRNQRFSLLKQPISSTLNQHLVDYPTPSNLS) the chain is Mitochondrial matrix. Residues 34-57 (YWWGFGSLAGICLVIQIVTGVFLA) form a helical membrane-spanning segment. Residues 58 to 80 (MHYTPHVDLAFNSVEHIMRDVEG) are Mitochondrial intermembrane-facing. Residues 81-108 (GWLLRYMHANGASMFFIVVYLHIFRGLY) traverse the membrane as a helical segment. The heme b site is built by H88 and H102. At 109–116 (YASYSSPR) the chain is on the mitochondrial matrix side. Residues 117 to 141 (EFVWCLGVVIFLLMIVTAFIGYVLP) form a helical membrane-spanning segment. The Mitochondrial intermembrane segment spans residues 142–178 (WGQMSFWGATVITSLASAIPVVGDTIVTWLWGGFSVD). The chain crosses the membrane as a helical span at residues 179–210 (NATLNRFFSLHYLLPFILVGASLLHLAALHQY). 2 residues coordinate heme b: H189 and H203. Residue H208 participates in a ubiquinone binding. Over 211 to 229 (GSNNPLGVHSEMDKIAFYP) the chain is Mitochondrial matrix. Residues 230–252 (YFYVKDLVGWVAFAIFFSIWIFY) traverse the membrane as a helical segment. The Mitochondrial intermembrane segment spans residues 253–293 (APNVLGHPDNYIPANPMSTPPHIVPEWYFLPIYAILRSIPD). The chain crosses the membrane as a helical span at residues 294–314 (KAGGVAAIALVFICLLALPFF). The Mitochondrial matrix portion of the chain corresponds to 315–325 (KSMYVRSSSFR). The helical transmembrane segment at 326 to 346 (PIYQGMFWLLLADCLLLGWIG) threads the bilayer. Residues 347–353 (CQPVEAP) are Mitochondrial intermembrane-facing. Residues 354-370 (FVTIGQISSLVFFLFFA) form a helical membrane-spanning segment. Topologically, residues 371-393 (ITPILGRVGRGIPNSYTDETDHT) are mitochondrial matrix.

Belongs to the cytochrome b family. In terms of assembly, component of the ubiquinol-cytochrome c oxidoreductase (cytochrome b-c1 complex, complex III, CIII), a multisubunit enzyme composed of 10 subunits. The complex is composed of 3 respiratory subunits cytochrome b (MT-CYB), cytochrome c1 (CYC1-1 or CYC1-2) and Rieske protein (UCR1-1 or UCR1-2), 2 core protein subunits MPPalpha1 (or MPPalpha2) and MPPB, and 5 low-molecular weight protein subunits QCR7-1 (or QCR7-2), UCRQ-1 (or UCRQ-2), QCR9, UCRY and probably QCR6-1 (or QCR6-2). The complex exists as an obligatory dimer and forms supercomplexes (SCs) in the inner mitochondrial membrane with NADH-ubiquinone oxidoreductase (complex I, CI), resulting in different assemblies (supercomplexes SCI(1)III(2) and SCI(2)III(4)). Requires heme b as cofactor.

It is found in the mitochondrion inner membrane. In terms of biological role, component of the ubiquinol-cytochrome c oxidoreductase, a multisubunit transmembrane complex that is part of the mitochondrial electron transport chain which drives oxidative phosphorylation. The respiratory chain contains 3 multisubunit complexes succinate dehydrogenase (complex II, CII), ubiquinol-cytochrome c oxidoreductase (cytochrome b-c1 complex, complex III, CIII) and cytochrome c oxidase (complex IV, CIV), that cooperate to transfer electrons derived from NADH and succinate to molecular oxygen, creating an electrochemical gradient over the inner membrane that drives transmembrane transport and the ATP synthase. The cytochrome b-c1 complex catalyzes electron transfer from ubiquinol to cytochrome c, linking this redox reaction to translocation of protons across the mitochondrial inner membrane, with protons being carried across the membrane as hydrogens on the quinol. In the process called Q cycle, 2 protons are consumed from the matrix, 4 protons are released into the intermembrane space and 2 electrons are passed to cytochrome c. Cytochrome b is a catalytic core subunit containing 2 b-type hemes BL and BH topographically segregated in the quinone reduction (Qi) and quinol oxidation (Q0) sites on opposite sides of the membrane. This Arabidopsis thaliana (Mouse-ear cress) protein is Cytochrome b (MT-CYB).